Consider the following 38-residue polypeptide: FEMQYCWSHSGVCRDKSERNNKPMAWTYCENRQKKCEF.

Disulfide bonds link C6–C36 and C13–C29.

As to expression, produced by the crural gland and detected in venom from the spur located on each male hind leg.

The protein resides in the secreted. In terms of biological role, does not show antimicrobial, myotoxic, hemolytic and cell-promoting activities. This chain is Defensin-like peptide 3, found in Ornithorhynchus anatinus (Duckbill platypus).